The chain runs to 843 residues: Protein translocase subunit SecA 1 (843 aa).

ATP is bound by residues glutamine 91, 109 to 113, and aspartate 498; that span reads GEGKT. Basic and acidic residues predominate over residues 799–813; the sequence is EAKHVSAEDGKEKVK. The disordered stretch occupies residues 799-826; that stretch reads EAKHVSAEDGKEKVKPKPIVKGDQVGRN. Zn(2+)-binding residues include cysteine 829, cysteine 831, cysteine 840, and histidine 841.

The protein belongs to the SecA family. Monomer and homodimer. Part of the essential Sec protein translocation apparatus which comprises SecA, SecYEG and auxiliary proteins SecDF. Other proteins may also be involved. It depends on Zn(2+) as a cofactor.

The protein resides in the cell membrane. The protein localises to the cytoplasm. The catalysed reaction is ATP + H2O + cellular proteinSide 1 = ADP + phosphate + cellular proteinSide 2.. Functionally, part of the Sec protein translocase complex. Interacts with the SecYEG preprotein conducting channel. Has a central role in coupling the hydrolysis of ATP to the transfer of proteins into and across the cell membrane, serving as an ATP-driven molecular motor driving the stepwise translocation of polypeptide chains across the membrane. The sequence is that of Protein translocase subunit SecA 1 from Staphylococcus aureus (strain N315).